The primary structure comprises 192 residues: Orotate phosphoribosyltransferase (192 aa).

A 5-phospho-alpha-D-ribose 1-diphosphate-binding site is contributed by 116-124 (EDIVTTGLS). Orotate-binding residues include Thr120 and Arg148.

This sequence belongs to the purine/pyrimidine phosphoribosyltransferase family. PyrE subfamily. Homodimer. Requires Mg(2+) as cofactor.

It catalyses the reaction orotidine 5'-phosphate + diphosphate = orotate + 5-phospho-alpha-D-ribose 1-diphosphate. Its pathway is pyrimidine metabolism; UMP biosynthesis via de novo pathway; UMP from orotate: step 1/2. Its function is as follows. Catalyzes the transfer of a ribosyl phosphate group from 5-phosphoribose 1-diphosphate to orotate, leading to the formation of orotidine monophosphate (OMP). The chain is Orotate phosphoribosyltransferase from Bartonella quintana (strain Toulouse) (Rochalimaea quintana).